Reading from the N-terminus, the 182-residue chain is Ribosome-recycling factor (182 aa).

This sequence belongs to the RRF family.

The protein resides in the cytoplasm. Functionally, responsible for the release of ribosomes from messenger RNA at the termination of protein biosynthesis. May increase the efficiency of translation by recycling ribosomes from one round of translation to another. The polypeptide is Ribosome-recycling factor (Synechococcus sp. (strain WH7803)).